Reading from the N-terminus, the 280-residue chain is Shikimate dehydrogenase (NADP(+)) (280 aa).

Shikimate is bound by residues 20–22 (SRS) and Thr-67. Lys-71 (proton acceptor) is an active-site residue. Asp-82 provides a ligand contact to NADP(+). Shikimate contacts are provided by Asn-91 and Asp-106. Residues 131–135 (GAGGS) and Leu-220 each bind NADP(+). Tyr-222 contacts shikimate. An NADP(+)-binding site is contributed by Gly-243.

It belongs to the shikimate dehydrogenase family. As to quaternary structure, homodimer.

It carries out the reaction shikimate + NADP(+) = 3-dehydroshikimate + NADPH + H(+). It functions in the pathway metabolic intermediate biosynthesis; chorismate biosynthesis; chorismate from D-erythrose 4-phosphate and phosphoenolpyruvate: step 4/7. Involved in the biosynthesis of the chorismate, which leads to the biosynthesis of aromatic amino acids. Catalyzes the reversible NADPH linked reduction of 3-dehydroshikimate (DHSA) to yield shikimate (SA). The protein is Shikimate dehydrogenase (NADP(+)) of Rhodopseudomonas palustris (strain HaA2).